The primary structure comprises 158 residues: MSQELNSMFSPHSRLRHAVADTFAMVVYCSVVGMMIEIFVSGMSFEQSLSSRLVAIPVNMVIAWPYGLYRDAVMRLAARVGKGRLVRNLADVIAYITFQSPVYAAILLFVGADIPQIITAVSSNIVVSMMMGAAYGYFLDYCRRLFRVSPAAPVSAQA.

The next 4 helical transmembrane spans lie at phenylalanine 23–methionine 43, leucine 53–valine 73, valine 92–alanine 112, and isoleucine 117–tyrosine 137.

Belongs to the AlaE exporter family.

It is found in the cell inner membrane. Its function is as follows. Exports L-alanine. The chain is L-alanine exporter AlaE from Cronobacter sakazakii (strain ATCC BAA-894) (Enterobacter sakazakii).